The primary structure comprises 446 residues: Coiled-coil domain-containing protein 112 (446 aa).

2 coiled-coil regions span residues 23-116 (LEEL…RKID) and 219-400 (ERKK…NVSR). Disordered regions lie at residues 247–277 (NNTP…AVEA) and 394–430 (VENN…LLHI). Residues 255 to 268 (NKPEDNQKQKEEQR) are compositionally biased toward basic and acidic residues.

It localises to the cytoplasm. It is found in the cytoskeleton. Its subcellular location is the microtubule organizing center. The protein localises to the centrosome. The protein resides in the centriolar satellite. This is Coiled-coil domain-containing protein 112 (CCDC112) from Macaca fascicularis (Crab-eating macaque).